The primary structure comprises 1023 residues: Phosphoenolpyruvate carboxylase (1023 aa).

Residues His199 and Lys669 contribute to the active site.

The protein belongs to the PEPCase type 1 family. Mg(2+) serves as cofactor.

It catalyses the reaction oxaloacetate + phosphate = phosphoenolpyruvate + hydrogencarbonate. Functionally, forms oxaloacetate, a four-carbon dicarboxylic acid source for the tricarboxylic acid cycle. This Trichormus variabilis (strain ATCC 29413 / PCC 7937) (Anabaena variabilis) protein is Phosphoenolpyruvate carboxylase.